Here is a 235-residue protein sequence, read N- to C-terminus: Octanoyltransferase (235 aa).

The BPL/LPL catalytic domain occupies 44-231; that stretch reads DTTADELWLV…HQVGLPNENN (188 aa). Substrate-binding positions include 83–90, 150–152, and 163–165; these read RGGQVTYH, SLG, and GLA. Cysteine 181 acts as the Acyl-thioester intermediate in catalysis.

It belongs to the LipB family.

It localises to the cytoplasm. It carries out the reaction octanoyl-[ACP] + L-lysyl-[protein] = N(6)-octanoyl-L-lysyl-[protein] + holo-[ACP] + H(+). It participates in protein modification; protein lipoylation via endogenous pathway; protein N(6)-(lipoyl)lysine from octanoyl-[acyl-carrier-protein]: step 1/2. Its function is as follows. Catalyzes the transfer of endogenously produced octanoic acid from octanoyl-acyl-carrier-protein onto the lipoyl domains of lipoate-dependent enzymes. Lipoyl-ACP can also act as a substrate although octanoyl-ACP is likely to be the physiological substrate. In Colwellia psychrerythraea (strain 34H / ATCC BAA-681) (Vibrio psychroerythus), this protein is Octanoyltransferase.